The following is a 386-amino-acid chain: L-arabinitol 4-dehydrogenase (386 aa).

Zn(2+) is bound by residues Cys55, His80, Glu81, Cys110, Cys113, Cys116, Cys124, and Glu165. Residues 192–193, Asp213, Arg218, Ile293, and 317–319 each bind NAD(+); these read PI and QYR.

It belongs to the zinc-containing alcohol dehydrogenase family. Homotetramer. Zn(2+) serves as cofactor.

It carries out the reaction L-arabinitol + NAD(+) = L-xylulose + NADH + H(+). It participates in carbohydrate degradation; L-arabinose degradation via L-arabinitol; D-xylulose 5-phosphate from L-arabinose (fungal route): step 2/5. In terms of biological role, catalyzes the NAD-dependent oxidation of L-arabinitol to L-xylulose in the fungal L-arabinose catabolic pathway. L-arabinose catabolism is important for using plant material as a carbon source. Not active with NADP as cosubstrate. The chain is L-arabinitol 4-dehydrogenase (ladA) from Aspergillus niger (strain ATCC MYA-4892 / CBS 513.88 / FGSC A1513).